Reading from the N-terminus, the 88-residue chain is Apolipoprotein C-I (88 aa).

Residues 1–26 (MRLFIALPVLIVVVAMALEGPAPAQA) form the signal peptide.

This sequence belongs to the apolipoprotein C1 family.

The protein resides in the secreted. In terms of biological role, inhibitor of lipoprotein binding to the low density lipoprotein (LDL) receptor, LDL receptor-related protein, and very low density lipoprotein (VLDL) receptor. Associates with high density lipoproteins (HDL) and the triacylglycerol-rich lipoproteins in the plasma and makes up about 10% of the protein of the VLDL and 2% of that of HDL. Appears to interfere directly with fatty acid uptake and is also the major plasma inhibitor of cholesteryl ester transfer protein (CETP). Modulates the interaction of APOE with beta-migrating VLDL and inhibits binding of beta-VLDL to the LDL receptor-related protein. Binds free fatty acids and reduces their intracellular esterification. This chain is Apolipoprotein C-I (Apoc1), found in Grammomys surdaster (African woodland thicket rat).